The chain runs to 343 residues: UPF0324 membrane protein LJ_1117 (343 aa).

The next 10 helical transmembrane spans lie at 10-27 (FGLA…GIFL), 32-54 (YVNL…VLPV), 64-86 (IGFI…LNLT), 91-113 (AGIK…TYWL), 123-145 (LAVL…VSPQ), 157-179 (NEVL…EIVI), 219-241 (ALIM…GYWY), 262-284 (IPWF…FPPV), 288-310 (GLVQ…SVNF), and 317-339 (GGTV…IIMS).

This sequence belongs to the UPF0324 family.

Its subcellular location is the cell membrane. This chain is UPF0324 membrane protein LJ_1117, found in Lactobacillus johnsonii (strain CNCM I-12250 / La1 / NCC 533).